A 131-amino-acid chain; its full sequence is Fluoride-specific ion channel FluC (131 aa).

A run of 3 helical transmembrane segments spans residues alanine 3–leucine 23, isoleucine 34–glycine 54, and alanine 62–leucine 82. Na(+) is bound by residues glycine 80 and threonine 83. Residues tryptophan 101–isoleucine 121 traverse the membrane as a helical segment.

The protein belongs to the fluoride channel Fluc/FEX (TC 1.A.43) family.

It localises to the cell inner membrane. It catalyses the reaction fluoride(in) = fluoride(out). Na(+) is not transported, but it plays an essential structural role and its presence is essential for fluoride channel function. Functionally, fluoride-specific ion channel. Important for reducing fluoride concentration in the cell, thus reducing its toxicity. This is Fluoride-specific ion channel FluC from Aromatoleum aromaticum (strain DSM 19018 / LMG 30748 / EbN1) (Azoarcus sp. (strain EbN1)).